The primary structure comprises 203 residues: CASP-like protein 2U2 (203 aa).

A disordered region spans residues 1-21 (MGGFVDDGAAGLAPSHGSSRA). Residues 1-27 (MGGFVDDGAAGLAPSHGSSRAGRGLEG) lie on the Cytoplasmic side of the membrane. The chain crosses the membrane as a helical span at residues 28-48 (AGVFLRFVASLLSIAGLMLLV). Residues 49-73 (KDNQTVQQMVATEAVTLETKYSDIS) are Extracellular-facing. N51 carries an N-linked (GlcNAc...) asparagine glycan. The chain crosses the membrane as a helical span at residues 74 to 94 (AFVFLLYTNGLVAVYCFFLAL). Residues 95-108 (ASVFSLIASARSGK) lie on the Cytoplasmic side of the membrane. Residues 109 to 129 (LAGWVTFVLDQGLAYVLLAAA) form a helical membrane-spanning segment. Residues 130-163 (AASTEVLYLAENGDLKTSWAEICSQFGHFCHMAR) are Extracellular-facing. Residues 164–184 (ASIVVSFLSMLAMAVLSVMSA) form a helical membrane-spanning segment. At 185 to 203 (QQLFSKYRRPMTAKTAQDI) the chain is on the cytoplasmic side.

This sequence belongs to the Casparian strip membrane proteins (CASP) family. Homodimer and heterodimers.

Its subcellular location is the cell membrane. This Osmunda lancea (Fern) protein is CASP-like protein 2U2.